Consider the following 332-residue polypeptide: Fructose-1,6-bisphosphatase class 1 (332 aa).

Mg(2+) contacts are provided by Glu91, Asp112, Leu114, and Asp115. Residues 115–118 (DGSS), Asn208, Tyr241, and Lys271 contribute to the substrate site. Glu277 lines the Mg(2+) pocket.

It belongs to the FBPase class 1 family. In terms of assembly, homotetramer. It depends on Mg(2+) as a cofactor.

The protein localises to the cytoplasm. The enzyme catalyses beta-D-fructose 1,6-bisphosphate + H2O = beta-D-fructose 6-phosphate + phosphate. The protein operates within carbohydrate biosynthesis; Calvin cycle. The chain is Fructose-1,6-bisphosphatase class 1 from Chlorobium phaeobacteroides (strain DSM 266 / SMG 266 / 2430).